A 591-amino-acid chain; its full sequence is DDB1- and CUL4-associated factor 8 (591 aa).

A compositionally biased stretch (polar residues) spans 1–25 (MSNKRPNTTDGRTDLANGSLSSSPE). The disordered stretch occupies residues 1–140 (MSNKRPNTTD…EDWVSSETTA (140 aa)). Phosphoserine is present on residues Ser-22 and Ser-23. Residues 40 to 51 (IEVEASDLSLSL) carry the Nuclear export signal motif. Composition is skewed to basic and acidic residues over residues 66 to 100 (RGTD…HGHS) and 118 to 131 (SRDQ…RALE). Ser-100, Ser-123, and Ser-124 each carry phosphoserine. WD repeat units follow at residues 185–224 (GHTG…PVLD), 228–269 (GHKS…CCKN), 275–315 (QHKG…PASK), 323–363 (EKKV…ENEN), 379–418 (ESKA…GAQY), 426–466 (RNNA…IIQF), and 470–509 (DKGG…STEL). Omega-N-methylarginine; by PRMT1 is present on Arg-198. The segment at 552–591 (HRRWREPGVGATDADSDESPSSSDTSDEEEGPDRVQCMPS) is disordered.

This sequence belongs to the WD repeat DCAF8 family. Interacts with DDB1, CUL4A and CUL4B. Interacts with KPNA1, KPNB1 and XPO1. Expressed in the brain.

The protein localises to the nucleus. Its subcellular location is the cytoplasm. The protein operates within protein modification; protein ubiquitination. Its function is as follows. May function as a substrate receptor for CUL4-DDB1 E3 ubiquitin-protein ligase complex. This Mus musculus (Mouse) protein is DDB1- and CUL4-associated factor 8 (Dcaf8).